The chain runs to 185 residues: Peptidyl-tRNA hydrolase (185 aa).

A tRNA-binding site is contributed by Tyr-14. Residue His-19 is the Proton acceptor of the active site. TRNA-binding residues include Tyr-64, Asn-66, and Asn-112.

This sequence belongs to the PTH family. As to quaternary structure, monomer.

Its subcellular location is the cytoplasm. The enzyme catalyses an N-acyl-L-alpha-aminoacyl-tRNA + H2O = an N-acyl-L-amino acid + a tRNA + H(+). Its function is as follows. Hydrolyzes ribosome-free peptidyl-tRNAs (with 1 or more amino acids incorporated), which drop off the ribosome during protein synthesis, or as a result of ribosome stalling. Catalyzes the release of premature peptidyl moieties from peptidyl-tRNA molecules trapped in stalled 50S ribosomal subunits, and thus maintains levels of free tRNAs and 50S ribosomes. The polypeptide is Peptidyl-tRNA hydrolase (Lactobacillus helveticus (strain DPC 4571)).